A 341-amino-acid chain; its full sequence is Arfaptin-2 (341 aa).

Positions 46 to 84 (NETSIVSGGYGGSGDGLIPTGSGRHPSHSTSPSGPGDEV) are disordered. The segment covering 65–81 (TGSGRHPSHSTSPSGPG) has biased composition (low complexity). Phosphoserine is present on Ser-72. In terms of domain architecture, AH spans 121 to 321 (TVDLELELQI…NQKQLEQTLQ (201 aa)).

In terms of assembly, forms homodimers or heterodimers with ARFIP1. Interacts with RAC1. Specifically binds to GTP-bound ARF1 and ARF6, but binds to RAC1.GTP and RAC1.GDP with similar affinities. Interacts with ARL1. Interacts (via N-terminus) with IKBKB and IKBKG; these interactions inhibit activation of NF-kappa-B.

It is found in the golgi apparatus. Its subcellular location is the trans-Golgi network membrane. Functionally, plays a role in constitutive metalloproteinase (MMP) secretion from the trans Golgi network. May have important functions during vesicle biogenesis at certain cargo subdomains, which could be predominantly utilized by secreted MMPs, such as MMP7 and MMP2. Also involved in autophagy by regulating the starvation-dependent trafficking of ATG9A vesicles which deliver the phosphatidylinositol 4-kinase beta (PI4KB) to the autophagosome initiation site. Involved in phagophore growth during mitophagy by regulating ATG9A trafficking to mitochondria. In addition, plays a role in NF-kappa-B inhibition by interacting with IKBKB and IKBKG. This is Arfaptin-2 from Mus musculus (Mouse).